We begin with the raw amino-acid sequence, 605 residues long: DNA mismatch repair protein MutL (605 aa).

It belongs to the DNA mismatch repair MutL/HexB family.

This protein is involved in the repair of mismatches in DNA. It is required for dam-dependent methyl-directed DNA mismatch repair. May act as a 'molecular matchmaker', a protein that promotes the formation of a stable complex between two or more DNA-binding proteins in an ATP-dependent manner without itself being part of a final effector complex. This chain is DNA mismatch repair protein MutL, found in Methylocella silvestris (strain DSM 15510 / CIP 108128 / LMG 27833 / NCIMB 13906 / BL2).